Here is a 152-residue protein sequence, read N- to C-terminus: Deoxyuridine 5'-triphosphate nucleotidohydrolase (152 aa).

Residues 71–73 (RSG), N84, 88–90 (LID), and M98 each bind substrate.

Belongs to the dUTPase family. Requires Mg(2+) as cofactor.

The enzyme catalyses dUTP + H2O = dUMP + diphosphate + H(+). Its pathway is pyrimidine metabolism; dUMP biosynthesis; dUMP from dCTP (dUTP route): step 2/2. In terms of biological role, this enzyme is involved in nucleotide metabolism: it produces dUMP, the immediate precursor of thymidine nucleotides and it decreases the intracellular concentration of dUTP so that uracil cannot be incorporated into DNA. The polypeptide is Deoxyuridine 5'-triphosphate nucleotidohydrolase (Coxiella burnetii (strain RSA 331 / Henzerling II)).